The primary structure comprises 100 residues: Small ribosomal subunit protein uS14 (100 aa).

Zn(2+) contacts are provided by Cys-63, Cys-66, Cys-79, and Cys-82.

It belongs to the universal ribosomal protein uS14 family. Part of the 30S ribosomal subunit. Contacts proteins S3 and S10. It depends on Zn(2+) as a cofactor.

Its function is as follows. Binds 16S rRNA, required for the assembly of 30S particles and may also be responsible for determining the conformation of the 16S rRNA at the A site. The chain is Small ribosomal subunit protein uS14 (rpsN) from Legionella pneumophila (strain Paris).